The primary structure comprises 177 residues: Large ribosomal subunit protein bL31m (177 aa).

Residues 1–14 constitute a mitochondrion transit peptide; sequence MLKSIFAKRFASTG. The segment at 36 to 118 is sufficient for general mitochondrial translation; the sequence is KSRPAIYHQF…FSVDSTTPNS (83 aa). The sufficient for dosage suppression of COX2 mutation stretch occupies residues 87-177; it reads LVVVDANSGG…KLASKKRDKK (91 aa). The span at 111–123 shows a compositional bias: polar residues; sequence VDSTTPNSSSETV. Positions 111–144 are disordered; the sequence is VDSTTPNSSSETVELSEENKKKTQIKKEEKEDVS. Residues 127–144 show a composition bias toward basic and acidic residues; the sequence is EENKKKTQIKKEEKEDVS.

The protein belongs to the bacterial ribosomal protein bL31 family. Highly divergent. Component of the mitochondrial large ribosomal subunit (mt-LSU). Mature yeast 74S mitochondrial ribosomes consist of a small (37S) and a large (54S) subunit. The 37S small subunit contains a 15S ribosomal RNA (15S mt-rRNA) and 34 different proteins. The 54S large subunit contains a 21S rRNA (21S mt-rRNA) and 46 different proteins.

It localises to the mitochondrion. Its function is as follows. Component of the mitochondrial ribosome (mitoribosome), a dedicated translation machinery responsible for the synthesis of mitochondrial genome-encoded proteins, including at least some of the essential transmembrane subunits of the mitochondrial respiratory chain. The mitoribosomes are attached to the mitochondrial inner membrane and translation products are cotranslationally integrated into the membrane. Overexpression of bL31m suppresses mutations in the COX2 leader peptide-encoding and initiation codon regions. This Saccharomyces cerevisiae (strain ATCC 204508 / S288c) (Baker's yeast) protein is Large ribosomal subunit protein bL31m (MRPL36).